The sequence spans 87 residues: Homeotic protein ultrabithorax (87 aa).

An Antp-type hexapeptide motif is present at residues 22-27 (FYPWMA).

Belongs to the Antp homeobox family. In terms of tissue distribution, in the embryo, expression is seen in the epidermis, somatic and visceral mesoderm, and the peripheral and central nervous system.

It is found in the nucleus. In terms of biological role, sequence-specific transcription factor which is part of a developmental regulatory system that provides cells with specific positional identities on the anterior-posterior axis. Binds the consensus region 5'-TTAAT[GT][GA]-3'. This homeotic protein controls development of the cells in the posterior thoracic and first abdominal segments. It activates the synthesis of the decapentaplegic (DPP) growth factor. In Drosophila virilis (Fruit fly), this protein is Homeotic protein ultrabithorax (Ubx).